A 1017-amino-acid chain; its full sequence is Stereoselective keto-reductase af490 (1017 aa).

Residues 6-138 (NELSGSQVPG…GRLRMTFAGH (133 aa)) are N-terminal hotdog fold. Positions 6 to 311 (NELSGSQVPG…MSPIAPSTEK (306 aa)) constitute a PKS/mFAS DH domain. Residues 8–306 (LSGSQVPGAT…LEGLTMSPIA (299 aa)) are dehydratase (DH). The segment at 153-311 (LRPVSISPFY…MSPIAPSTEK (159 aa)) is C-terminal hotdog fold. The interval 532–720 (QIRFLRAPFD…VQGGRLLIPR (189 aa)) is ketoreductase (KR).

The enzyme catalyses fumagillol + NADP(+) = 5-dehydrofumagillol + NADPH + H(+). It participates in secondary metabolite biosynthesis; terpenoid biosynthesis. Functionally, stereoselective keto-reductase; part of the gene cluster that mediates the biosynthesis of fumagillin, a meroterpenoid that has numerous biological activities including irreversible inhibition of human type 2 methionine aminopeptidase (METAP2). Within the pathway, the keto-reductase af490 acts as a 5-dehydrofumagillol 5-reductase that stereoselectively reduces 5-keto-fumagillol to 5R-hydroxy-seco-sesquiterpene. The pathway begins with the conversion of farnesyl pyrophosphate (FPP) to beta-trans-bergamotene by the membrane-bound beta-trans-bergamotene synthase af520. The multifunctional cytochrome P450 monooxygenase af510 then converts beta-trans-bergamotene into 5-keto-demethoxyfumagillol via several oxydation steps. 5-keto-demethoxyfumagillol is then subjected to successive C-6 hydroxylation and O-methylation by the dioxygenase af480 and O-methyltransferase af390-400, respectively, to yield 5-keto-fumagillol, which is then stereoselectively reduced by the keto-reductase af490 to 5R-hydroxy-seco-sesquiterpene. The next step is the polyketide transferase af380-catalyzed transfer of a dodecapentaenoyl group synthesized by the polyketide synthase af370 onto 5R-hydroxy-seco-sesquiterpene which leads to the production of prefumagillin. Finally, oxidative cleavage by the monooxygenase af470 converts prefumagillin to fumagillin. The chain is Stereoselective keto-reductase af490 from Aspergillus fumigatus (strain ATCC MYA-4609 / CBS 101355 / FGSC A1100 / Af293) (Neosartorya fumigata).